The sequence spans 371 residues: MYEVDMTIIGGGLVGASIAWGLARSGTKPLVLDGADLDLRASRANFALVWVQGKGLHAPHYALWSDASARRWPTMANTLLDDSGIDVGLQQDGAFTFALSEEELEANRQDMESIELETNGRAPQFEVLDRQQTLDRVLGIGPEVVGSIYCAADGHVNALRLFHALHAAMERQGATYRPNHPVQSIEPTTGGFILKGEAFSILSRRIVLAAGLDNKRLAPMVGLSCPLKRSKGQILVTEKTQTALPCLSAGMRQADEGGIMIGDSEETDNTRISSSPDISAVLASRALRIFPALSDLNVVRSWTGFRVKTADGVPIYDHSERYPGAFLVACHSGVTLAANHALIVAQQIAAGQLEDELSVFSARRFHAQQAV.

Heterodimer of a subunit A and a subunit B.

It participates in opine metabolism; octopine degradation. Oxidative cleavage of octopine into L-arginine and pyruvate. The chain is Opine oxidase subunit B (ooxB) from Agrobacterium tumefaciens (strain Ach5).